The following is a 117-amino-acid chain: MPSIRVLFVLLAVILLFMEVKMTSAASIVKDVDEDETLENEDGEAMENSWPWHGVEDTSDYSDLSDLANSEKRGTCIDLGSRLYCKLIRRRGMCRSRSHRARIAMMRCERSCGRCHL.

Residues 1–25 form the signal peptide; that stretch reads MPSIRVLFVLLAVILLFMEVKMTSA. Positions 26–73 are excised as a propeptide; sequence ASIVKDVDEDETLENEDGEAMENSWPWHGVEDTSDYSDLSDLANSEKR. Intrachain disulfides connect Cys76-Cys115, Cys85-Cys108, and Cys94-Cys112.

It belongs to the coral AMP family.

The protein localises to the secreted. Its function is as follows. Coral peptide that probably acts as an antimicrobial peptide in the surface mucous layer of planula larvae and likely also in adults. Shows moderate to high activity against some Gram-negative and Gram-positive bacteria (tested on E.coli, B.megaterium, S.aureus, E.aesturaii, B.algicola, Acinetobacter spec.). Does not show antibacterial activity against the coral pathogen V.coralliilyticus. The sequence is that of Antimicrobial peptide AmAMP1 from Acropora millepora (Staghorn coral).